We begin with the raw amino-acid sequence, 82 residues long: Omega-conotoxin-like Am6.2 (82 aa).

A signal peptide spans 1-22; the sequence is MKLTCMMIVAVLFLTAWTFVTA. Positions 23 to 52 are excised as a propeptide; it reads VPHSSNVLENLYLKARHEMENQEASKLNMR. 3 disulfide bridges follow: cysteine 56–cysteine 73, cysteine 63–cysteine 77, and cysteine 72–cysteine 81. At tryptophan 76 the chain carries 6'-bromotryptophan; partial; in Am6.2b (major form).

It belongs to the conotoxin O1 family. Mostly non-hydroxylated. In terms of processing, two forms of this peptides have been described. Am6.2a (Am3136) is not unmodified, while Am6.2b (Am3214) is Trp-76 brominated. Both forms are found in venom with a much more abundant brominated form. As to expression, expressed by the venom duct.

Its subcellular location is the secreted. Functionally, omega-conotoxins act at presynaptic membranes, they bind and block voltage-gated calcium channels (Cav). The sequence is that of Omega-conotoxin-like Am6.2 from Conus amadis (Amadis cone).